The chain runs to 499 residues: Putative sodium-dependent excitatory amino acid transporter glt-4 (499 aa).

Over 1–7 the chain is Cytoplasmic; sequence MAKLSKE. 3 helical membrane passes run 8 to 28, 50 to 70, and 87 to 107; these read NLLL…GFSL, FVQM…ITSL, and IYYT…VSVI. Asn-165 carries an N-linked (GlcNAc...) asparagine glycan. A run of 3 helical transmembrane segments spans residues 194–217, 227–254, and 276–297; these read VSDG…IGVI, FFKS…TFLI, and ITVI…CVVL. Residues 303-333 constitute an intramembrane region (discontinuously helical); that stretch reads IKFVGGMAQALLTALATSSSSATLPLSIKCC. 320–322 is an L-aspartate binding site; it reads SSS. Residues 343–369 form a helical membrane-spanning segment; that stretch reads VTRFVLPLGATINMDGTALYEAVAAIY. Residues Gly-351, Thr-353, and Asn-355 each contribute to the Na(+) site. L-aspartate-binding positions include Thr-359, 400-404, Asp-433, and Asn-440; that span reads IPQAG. An intramembrane region (discontinuously helical) is located at residues 383-416; the sequence is VVLVSLTATLASIGAAGIPQAGIVTMIMVLIAIG. The chain crosses the membrane as a helical span at residues 430–451; it reads FMLDRLRTTVNVHGDSIATAVI. Positions 440 and 444 each coordinate Na(+).

The protein belongs to the dicarboxylate/amino acid:cation symporter (DAACS) (TC 2.A.23) family.

The protein resides in the cell membrane. Sodium-dependent, high-affinity amino acid transporter that mediates the uptake of L-glutamate and also L-aspartate and D-aspartate. Functions as a symporter that transports one amino acid molecule together with two or three Na(+) ions and one proton, in parallel with the counter-transport of one K(+) ion. Mediates Cl(-) flux that is not coupled to amino acid transport; this avoids the accumulation of negative charges due to aspartate and Na(+) symport. The polypeptide is Putative sodium-dependent excitatory amino acid transporter glt-4 (glt-4) (Caenorhabditis elegans).